A 424-amino-acid chain; its full sequence is Enolase (424 aa).

A (2R)-2-phosphoglycerate-binding site is contributed by Gln-162. The active-site Proton donor is the Glu-204. Residues Asp-241, Glu-284, and Asp-311 each coordinate Mg(2+). Positions 336, 365, 366, and 387 each coordinate (2R)-2-phosphoglycerate. The Proton acceptor role is filled by Lys-336.

It belongs to the enolase family. The cofactor is Mg(2+).

The protein localises to the cytoplasm. It localises to the secreted. The protein resides in the cell surface. The catalysed reaction is (2R)-2-phosphoglycerate = phosphoenolpyruvate + H2O. It participates in carbohydrate degradation; glycolysis; pyruvate from D-glyceraldehyde 3-phosphate: step 4/5. Its function is as follows. Catalyzes the reversible conversion of 2-phosphoglycerate (2-PG) into phosphoenolpyruvate (PEP). It is essential for the degradation of carbohydrates via glycolysis. This is Enolase from Rhizobium leguminosarum bv. trifolii (strain WSM2304).